A 395-amino-acid polypeptide reads, in one-letter code: Envelope glycoprotein D (395 aa).

The signal sequence occupies residues 1–17 (MGSGIAAVLLSLAVALA). Residues 18 to 342 (RVPAGEGEYV…PAPAPSGHTG (325 aa)) are Virion surface-facing. Position 63 (histidine 63) interacts with Zn(2+). Cystine bridges form between cysteine 90–cysteine 214, cysteine 131–cysteine 227, and cysteine 143–cysteine 152. Asparagine 119 carries an N-linked (GlcNAc...) asparagine; by host glycan. Aspartate 240 provides a ligand contact to Zn(2+). The segment at 261–306 (LQAAGWHGPKAPFTSTLLPPEVVETANVTRPELAPEERGTSRTPGD) is profusion. Asparagine 287 is a glycosylation site (N-linked (GlcNAc...) asparagine; by host). The segment at 289 to 314 (TRPELAPEERGTSRTPGDEPAPAVAA) is disordered. Residues 343–362 (AVVGALAGAGLAAGVVVLAV) traverse the membrane as a helical segment. Topologically, residues 363 to 395 (YLVRRRGRAAGKHVRLPELLEEAHGPARRGAPY) are intravirion.

It belongs to the herpesviridae glycoprotein D family.

It is found in the virion membrane. Envelope glycoprotein that binds to host cell entry receptors, promoting the virus entry into host cells. May trigger fusion with host membrane, by recruiting the fusion machinery composed of gB and gH/gL. The sequence is that of Envelope glycoprotein D (gD) from Cercopithecine herpesvirus 1 (CeHV-1).